A 1169-amino-acid polypeptide reads, in one-letter code: MVTLEKIELKNFKSFKKLSLDIPKGFTAIVGPNGSGKSNIVDAILFVLGKTSAKKLRANRFSGLITYHNGKRADFAEVCLYFTNENNAFNVNADKVGILRRIKSSGETDYYLVWKENDKEKRKKMTKHEIIDLFRRLGLLGDNVISQGDLLKIINISPIERRKIIDEISGIAEFDEKKKKAEEELKKARELIEMIDIRISEVENNLKKLKKEKEDAEKYIKLNEELKAAKYALILKKVSYLNVLLENIQNDIKNLEELKNEFLSKVREIDVEIENLKLRLNNIINELNEKGNEEVLELHKSIKELEVEIENDKKVLDSSINELKKVEVEIENKKKEIKETQKKIIENRDSIIEKEQQIKEIEEKIKNLNYEKERLKEAIAESESIIKHLKESEMEIADEIAKNQNELYRLKKELNDLDNLINRKNFEIEKNNEMIKKLKEELETVEDVDTKPLYLELENLNVEIEFSKRGIKELEEKKKELQAKLDELHAEYVKENARIKALKEMEELSMDRAIREILNANLPGIIDIVGNLGKTKIEYKTAIEVAAGNRLNHIVVKRMDDAVRAIKYLKERKLGRATFLPLDRIEGREAYYIDEDGVIGRAIDLVEFDEKYRRVFEYVFGNTVVVENIDIAKELAKKYRKVRFVTLDGDVIEPSGAMIGGTFKSKAKIKVDVDLSKLNKIADEIIAIESELRKIKEEIERLSKIVKRSSAKKMEIENTLEIIKKNEMRKREIAEKNTIKIKELELKNKDILEELEELNLKREEILNRINEIESKINELIERREKIINELKEYESDENLKRMNEIEGELKILEKEKAKLKNEIDKGLTLVKEILIPKIEELNKKVSELINKKVILEKNISFYKESIEKNLSILEEKRKRYEELAKNLKELTEKKEQLEKEIETLERERREILRKVRDIENRINELMVEKAKYESKLEEEERKLYLCEKVDVSKELEKKDIEELEIYIGELENEIKSLEPVNMRAIEDYNYVAERYKELIEKRKEYERDEKKYLQLMEELENKKKEVFMEVFNKVAKNFEEVYKEIGGIGKLSLENEKNPFEGGILIDASPRGKKLLSLDAMSGGEKSLTALAFLFAIQRLNPSPFYVLDEVDAALDVKNVSLIADMIKNASKDSQFIVISHREQMVSKADVVYGVYMENGLSKVVGIRL.

ATP is bound at residue 32 to 39; that stretch reads PNGSGKSN. A coiled-coil region spans residues 166–507; that stretch reads DEISGIAEFD…RIKALKEMEE (342 aa). One can recognise an SMC hinge domain in the interval 523–636; the sequence is PGIIDIVGNL…ENIDIAKELA (114 aa). Residues 676-1030 adopt a coiled-coil conformation; that stretch reads SKLNKIADEI…NKKKEVFMEV (355 aa).

The protein belongs to the SMC family. Homodimer.

It localises to the cytoplasm. In terms of biological role, required for chromosome condensation and partitioning. The protein is Chromosome partition protein Smc of Methanocaldococcus jannaschii (strain ATCC 43067 / DSM 2661 / JAL-1 / JCM 10045 / NBRC 100440) (Methanococcus jannaschii).